The primary structure comprises 385 residues: Polyketide synthase 1 (385 aa).

Residue C157 is part of the active site.

Belongs to the thiolase-like superfamily. Chalcone/stilbene synthases family. As to expression, expressed in glandular trichomes.

It is found in the cytoplasm. Polyketide synthase responsible for the biosynthesis of secondary metabolites. This Cannabis sativa (Hemp) protein is Polyketide synthase 1 (PKSG1).